We begin with the raw amino-acid sequence, 473 residues long: Cysteine--tRNA ligase (473 aa).

Cysteine 30 lines the Zn(2+) pocket. The 'HIGH' region motif lies at 32-42 (MTVYDYCHIGH). Zn(2+) is bound by residues cysteine 213, histidine 238, and glutamate 242. The short motif at 270–274 (KMSKS) is the 'KMSKS' region element. Lysine 273 provides a ligand contact to ATP.

The protein belongs to the class-I aminoacyl-tRNA synthetase family. As to quaternary structure, monomer. Requires Zn(2+) as cofactor.

Its subcellular location is the cytoplasm. The catalysed reaction is tRNA(Cys) + L-cysteine + ATP = L-cysteinyl-tRNA(Cys) + AMP + diphosphate. This chain is Cysteine--tRNA ligase, found in Acinetobacter baumannii (strain AB307-0294).